The primary structure comprises 596 residues: Uptake hydrogenase large subunit (596 aa).

Residues Cys-75, Cys-78, Cys-575, and Cys-578 each contribute to the Ni(2+) site.

The protein belongs to the [NiFe]/[NiFeSe] hydrogenase large subunit family. In terms of assembly, heterodimer of a large and a small subunit. Requires Ni(2+) as cofactor.

The protein localises to the cell membrane. It catalyses the reaction H2 + A = AH2. In terms of biological role, this enzyme recycles the H(2) produced by nitrogenase to increase the production of ATP and to protect nitrogenase against inhibition or damage by O(2) under carbon- or phosphate-limited conditions. The protein is Uptake hydrogenase large subunit (hupB) of Rhizobium leguminosarum bv. viciae.